A 331-amino-acid chain; its full sequence is ESX-3 secretion system protein EccE3 (331 aa).

2 helical membrane-spanning segments follow: residues 11–31 (GRVT…PWQS) and 37–57 (LLGV…GLYF).

This sequence belongs to the EccE family. Part of the ESX-3 / type VII secretion system (T7SS), which is composed of cytosolic and membrane components. The ESX-3 membrane complex is composed of EccB3, EccC3, EccD3 and EccE3.

The protein localises to the cell inner membrane. Part of the ESX-3 specialized secretion system, which is important for iron and zinc uptake or homeostasis. This chain is ESX-3 secretion system protein EccE3, found in Mycobacterium tuberculosis (strain ATCC 25618 / H37Rv).